The chain runs to 513 residues: rRNA N(6)-adenosine-methyltransferase ZCCHC4 (513 aa).

Zn(2+) contacts are provided by Cys40, His42, Cys64, Cys73, Cys125, Cys128, His140, and His143. The GRF-type zinc finger occupies 40–82 (CPHGPTLLFVKVTQGKEETRRFYACSACRDRKDCNFFQWEDEK). Residues 172–175 (QYLF), Arg202, Asp225, 243–244 (NM), and Asp276 each bind S-adenosyl-L-methionine. Residues 337–357 (QVDYDNHALYKHGKTGRKQSP) are regulatory loop. Zn(2+) is bound by residues Cys380, Cys383, His393, Cys394, Cys397, Cys400, His410, Cys411, Cys414, Cys417, His424, Cys425, Cys428, Cys431, His436, and Cys438. Residues 395 to 447 (ELCNSCTSKDGRKWNHCFLCKKCVKPSWIHCSICNHCAVPDHSCEGPKHGCFI) form the DHHC domain. Residues 443–460 (HGCFICGELDHKRSTCPN) form a CCHC-type zinc finger. Residues 466–481 (RANKAVRKQKQRKSNK) are compositionally biased toward basic residues. Positions 466-513 (RANKAVRKQKQRKSNKMKMETTKGQSMNHTSATRRKKRRERAHQYLGS) are disordered. Polar residues predominate over residues 487 to 496 (TKGQSMNHTS). A compositionally biased stretch (basic residues) spans 497-506 (ATRRKKRRER).

The protein belongs to the ZCCHC4 family. Interacts with components of the ASC-1 complex TRIP4, ASCC1, ASCC2 and ASCC3. Interact with AHCYL1 and AHCYL2. Interact with YTHDC2.

It localises to the nucleus. The protein resides in the nucleolus. Its subcellular location is the cytoplasm. The catalysed reaction is adenosine(4220) in 28S rRNA + S-adenosyl-L-methionine = N(6)-methyladenosine(4220) in 28S rRNA + S-adenosyl-L-homocysteine + H(+). Functionally, rRNA N6-methyltransferase that specifically methylates the adenine in position 4220 of 28S rRNA. N6-methylation of adenine(4220) in 28S rRNA is required for translation. The protein is rRNA N(6)-adenosine-methyltransferase ZCCHC4 of Homo sapiens (Human).